The chain runs to 509 residues: Cytochrome P450 monooxygenase ORF9 (509 aa).

2 helical membrane passes run 20–40 (IYVLPFVISAAALCYFIGLIV) and 309–329 (LIIAGGETVATFLAATVYYLL). Asn353 carries N-linked (GlcNAc...) asparagine glycosylation. Heme is bound at residue Cys448.

Belongs to the cytochrome P450 family. Requires heme as cofactor.

It localises to the membrane. Its pathway is sesquiterpene biosynthesis. In terms of biological role, cytochrome P450 monooxygenase; part of the gene cluster that mediates the biosynthesis of PR-toxin, a bicyclic sesquiterpene belonging to the eremophilane class and acting as a mycotoxin. The first step of the pathway is catalyzed by the aristolochene synthase which performs the cyclization of trans,trans-farnesyl diphosphate (FPP) to the bicyclic sesquiterpene aristolochene. Following the formation of aristolochene, the non-oxygenated aristolochene is converted to the trioxygenated intermediate eremofortin B, via 7-epi-neopetasone. This conversion appears to involve three enzymes, a hydroxysterol oxidase-like enzyme, the quinone-oxidase prx3 that forms the quinone-type-structure in the bicyclic nucleus of aristolochene with the C8-oxo group and the C-3 hydroxyl group, and the P450 monooxygenase ORF6 that introduces the epoxide at the double bond between carbons 1 and 2. No monoxy or dioxy-intermediates have been reported to be released to the broth, so these three early oxidative reactions may be coupled together. Eremofortin B is further oxidized by another P450 monooxygenase, that introduces a second epoxide between carbons 7 and 11 prior to acetylation to eremofortin A by the acetyltransferase ORF8. The second epoxidation may be performed by a second P450 monooxygenase. After the acetylation step, eremofortin A is converted to eremofortin C and then to PR-toxin. First the conversion of eremofortin A to eremofortin C proceeds by oxidation of the side chain of the molecule at C-12 and is catalyzed by the short-chain oxidoreductase prx1. The cytochrome P450 monooxygenase ORF6 is probably also involved in this step. The primary alcohol formed at C-12 is finally oxidized by the short-chain alcohol dehydrogenase prx4 that forms PR-toxin. The sequence is that of Cytochrome P450 monooxygenase ORF9 from Penicillium roqueforti (strain FM164).